The chain runs to 702 residues: Kinesin-like protein KIF3A (702 aa).

One can recognise a Kinesin motor domain in the interval 14–345 (NVKVVVRCRP…LRYANRAKNI (332 aa)). 100-107 (GQTGTGKT) contributes to the ATP binding site. Residues 355–593 (PKDALLRQFQ…LSRELRLQML (239 aa)) adopt a coiled-coil conformation. Disordered stretches follow at residues 372-424 (KKLE…KMIE) and 667-702 (LMKL…SLLQ). The segment covering 376 to 400 (EGEEISGSDISGSEEDDDEEGEIGE) has biased composition (acidic residues). Basic and acidic residues predominate over residues 410–424 (DQAGKKKVSPDKMIE). A globular region spans residues 600-702 (PRDYQEMIEN…PETVIDSLLQ (103 aa)). Basic residues predominate over residues 675-690 (TSKGKARPKTGRRKRS). Residue S690 is modified to Phosphoserine.

It belongs to the TRAFAC class myosin-kinesin ATPase superfamily. Kinesin family. Kinesin II subfamily. Heterodimer of KIF3A and KIF3B. Interacts with CIMAP3. Interacts with CLN3. Interacts with DCTN1. Interacts with FLCN. Interacts with AP3B1.

Its subcellular location is the cytoplasm. It localises to the cytoskeleton. The protein resides in the cell projection. It is found in the cilium. The protein localises to the microtubule organizing center. Its subcellular location is the centrosome. It localises to the centriole. Microtubule-based anterograde translocator for membranous organelles. Plus end-directed microtubule sliding activity in vitro. Plays a role in primary cilia formation. Plays a role in centriole cohesion and subdistal appendage organization and function. Regulates the formation of the subdistal appendage via recruitment of DCTN1 to the centriole. Also required for ciliary basal feet formation and microtubule anchoring to mother centriole. The protein is Kinesin-like protein KIF3A (KIF3A) of Pongo abelii (Sumatran orangutan).